A 246-amino-acid polypeptide reads, in one-letter code: Auxin-responsive protein IAA11 (246 aa).

Positions 36-40 (LGLTL) match the EAR-like (transcriptional repression) motif. In terms of domain architecture, PB1 spans 136–235 (SMFVKVTMDG…SVRRLRIMKT (100 aa)).

The protein belongs to the Aux/IAA family. As to quaternary structure, homodimers and heterodimers. Interacts with TPL. In terms of tissue distribution, preferentially expressed in stems and flowers.

The protein resides in the nucleus. In terms of biological role, aux/IAA proteins are short-lived transcriptional factors that function as repressors of early auxin response genes at low auxin concentrations. Repression is thought to result from the interaction with auxin response factors (ARFs), proteins that bind to the auxin-responsive promoter element (AuxRE). Formation of heterodimers with ARF proteins may alter their ability to modulate early auxin response genes expression. The polypeptide is Auxin-responsive protein IAA11 (IAA11) (Arabidopsis thaliana (Mouse-ear cress)).